A 473-amino-acid polypeptide reads, in one-letter code: Cannabinoid receptor 1 (473 aa).

Topologically, residues 1–121 (MKSILDGLAD…LNPSQQLAIA (121 aa)) are extracellular. A required for mitochondrial localization region spans residues 2–23 (KSILDGLADTTFRTITTDLLYV). N-linked (GlcNAc...) asparagine glycosylation is found at asparagine 78 and asparagine 84. Residues 122–142 (VLSLTLGTFTVLENLLVLCVI) traverse the membrane as a helical segment. The Cytoplasmic portion of the chain corresponds to 143–155 (LHSRSLRCRPSYH). The chain crosses the membrane as a helical span at residues 156–176 (FIGSLAVADLLGSVIFVYSFV). At 177 to 188 (DFHVFHRKDSPN) the chain is on the extracellular side. A helical transmembrane segment spans residues 189-209 (VFLFKLGGVTASFTASVGSLF). Residues 210 to 233 (LTAIDRYISIHRPLAYKRIVTRPK) lie on the Cytoplasmic side of the membrane. Residues 234–254 (AVVAFCLMWTIAIVIAVLPLL) form a helical membrane-spanning segment. At 255–278 (GWNCKKLQSVCSDIFPLIDETYLM) the chain is on the extracellular side. The helical transmembrane segment at 279-299 (FWIGVTSVLLLFIVYAYMYIL) threads the bilayer. Residues 300-345 (WKAHSHAVRMIQRGTQKSIIIHTSEDGKVQVTRPDQARMDIRLAKT) are Cytoplasmic-facing. The helical transmembrane segment at 346–366 (LVLILVVLIICWGPLLAIMVY) threads the bilayer. Over 367-378 (DVFGKMNKLIKT) the chain is Extracellular. A helical transmembrane segment spans residues 379–399 (VFAFCSMLCLLNSTVNPIIYA). Topologically, residues 400-473 (LRSKDLRHAF…VSTDTSAEAL (74 aa)) are cytoplasmic. Residue cysteine 416 is the site of S-palmitoyl cysteine attachment. Phosphoserine is present on residues serine 426 and serine 430.

It belongs to the G-protein coupled receptor 1 family. As to quaternary structure, interacts (via C-terminus) with CNRIP1. Associates with G protein alpha subunits, including G(i) alpha-1/GNAI1, G(i) alpha-3/GNAI3 and G(o)-alpha/GNAO1; palmitoylation is important for interaction with GNAI3 and GNAO1. Post-translationally, palmitoylation at Cys-416 is important for recruitment at both plasma membrane and lipid rafts and association with G protein alpha subunits. In terms of tissue distribution, expressed in brain neurons (at protein level). Detected throughout the striatum, cortex and hippocampus, with highest levels in the lateral striatum. In rostral brain regions, high expression levels in the dorsal lateral striatum, while in the caudal brain regions, high levels are observed in the ventral lateral striatum. Expressed in neurons. In the hypothalamus, expressed in both GABAergic and glutamatergic presynaptic terminals of POMC neurons (at protein level). Expressed in striated muscles, including skeletal muscles (gastrocnemius and rectus abdominis) and myocardium (at protein level). Expressed in the liver, with highest levels in Kupffer cells and lower levels in endothelial cells as well as hepatocytes, particularly in perivascular areas (at protein level). The hepatic expression level is up-regulated in obese mice compared to lean animals.

The protein resides in the cell membrane. It is found in the mitochondrion outer membrane. The protein localises to the cell projection. It localises to the axon. Its subcellular location is the presynapse. Hemopressin, a peptide derived from hemoglobin subunit alpha (HBA1 and/or HBA2), acts as an antagonist peptide: hemopressin-binding efficiently blocks cannabinoid receptor CNR1 and subsequent signaling. G-protein coupled receptor for cannabinoids, including endocannabinoids (eCBs), such as N-arachidonoylethanolamide (also called anandamide or AEA) and 2-arachidonoylglycerol (2-AG). Mediates many cannabinoid-induced effects, acting, among others, on food intake, memory loss, gastrointestinal motility, catalepsy, ambulatory activity, anxiety, chronic pain. Signaling typically involves reduction in cyclic AMP. In the hypothalamus, may have a dual effect on mitochondrial respiration depending upon the agonist dose and possibly upon the cell type. Increases respiration at low doses, while decreases respiration at high doses. At high doses, CNR1 signal transduction involves G-protein alpha-i protein activation and subsequent inhibition of mitochondrial soluble adenylate cyclase, decrease in cyclic AMP concentration, inhibition of protein kinase A (PKA)-dependent phosphorylation of specific subunits of the mitochondrial electron transport system, including NDUFS2. In the hypothalamus, inhibits leptin-induced reactive oxygen species (ROS) formation and mediates cannabinoid-induced increase in SREBF1 and FASN gene expression. In response to cannabinoids, drives the release of orexigenic beta-endorphin, but not that of melanocyte-stimulating hormone alpha/alpha-MSH, from hypothalamic POMC neurons, hence promoting food intake. In the hippocampus, regulates cellular respiration and energy production in response to cannabinoids. Involved in cannabinoid-dependent depolarization-induced suppression of inhibition (DSI), a process in which depolarization of CA1 postsynaptic pyramidal neurons mobilizes eCBs, which retrogradely activate presynaptic CB1 receptors, transiently decreasing GABAergic inhibitory neurotransmission. Also reduces excitatory synaptic transmission. In superior cervical ganglions and cerebral vascular smooth muscle cells, inhibits voltage-gated Ca(2+) channels in a constitutive, as well as agonist-dependent manner. In cerebral vascular smooth muscle cells, cannabinoid-induced inhibition of voltage-gated Ca(2+) channels leads to vasodilation and decreased vascular tone. Induces leptin production in adipocytes and reduces LRP2-mediated leptin clearance in the kidney, hence participating in hyperleptinemia. In adipose tissue, CNR1 signaling leads to increased expression of SREBF1, ACACA and FASN genes. In the liver, activation by endocannabinoids leads to increased de novo lipogenesis and reduced fatty acid catabolism, associated with increased expression of SREBF1/SREBP-1, GCK, ACACA, ACACB and FASN genes. May also affect de novo cholesterol synthesis and HDL-cholesteryl ether uptake. Peripherally modulates energy metabolism. In high carbohydrate diet-induced obesity, may decrease the expression of mitochondrial dihydrolipoyl dehydrogenase/DLD in striated muscles, as well as that of selected glucose/ pyruvate metabolic enzymes, hence affecting energy expenditure through mitochondrial metabolism. In response to cannabinoid anandamide, elicits a pro-inflammatory response in macrophages, which involves NLRP3 inflammasome activation and IL1B and IL18 secretion. In macrophages infiltrating pancreatic islets, this process may participate in the progression of type-2 diabetes and associated loss of pancreatic beta-cells. This is Cannabinoid receptor 1 (Cnr1) from Mus musculus (Mouse).